The chain runs to 663 residues: Telomere length regulator taz1 (663 aa).

Residues 15–72 (ENEGDQQFDKEVVQNSDSNIETGQISDSLTKAVEERAETESSSNLSNFTTSESESSKP) are disordered. Composition is skewed to polar residues over residues 27 to 43 (VQNS…SDSL) and 54 to 67 (ESSS…TSES). Position 332 is a phosphoserine (Ser-332). Disordered regions lie at residues 389 to 412 (GSTA…TFSE) and 471 to 554 (RAKS…PYEG). Composition is skewed to basic and acidic residues over residues 489 to 498 (KRGDNLRREA) and 512 to 524 (PPVR…ESRS). Positions 556 to 612 (RTRRKWTDEEENELYEMISQHGCCWSKIIHIQKLENGPLKTFGPTQIKDKARLIKAR) constitute a Myb-like domain.

Interacts with taf1 via the Myb domain, and ccq1.

The protein localises to the cytoplasm. Its subcellular location is the nucleus. It localises to the chromosome. The protein resides in the telomere. Regulates telomere length and function. Required for the repression of telomere-adjacent gene expression and for normal meiosis or sporulation. It may be a negative regulator of the telomere-replicating enzyme, telomerase, or may protect against activation of telomerase-independent pathways of telomere elongation. It may be involved in the interactions between chromosomes and spindle proteins, disruption of these interactions would lead to defective meiosis. This is Telomere length regulator taz1 (taz1) from Schizosaccharomyces pombe (strain 972 / ATCC 24843) (Fission yeast).